The primary structure comprises 485 residues: Probable high-affinity nitrate transporter 2.4 (485 aa).

A run of 12 helical transmembrane segments spans residues 56-76 (WMSLFACFFAAFAAPPILPAM), 80-100 (LVLAPSDASAAAVASLSATLV), 119-139 (GVASLVCALALALAAVFASSP), 147-167 (FVAGLSLANFVANQHWMSRIF), 177-197 (AVAAGWANVGSAAAQVVMPVA), 215-235 (VTYLLPCAMLVTTGLAVLAFP), 270-290 (AWLLGLTYGHCYGVELIMENV), 305-327 (AAGAAAACFGAMNAVARPAGGVA), 341-361 (LWALWAVQSAGAALCVLVGRM), 377-397 (VACAAFVQAASGLTFGIVPFV), 405-425 (VSGMTASGGAVGAIVTNRLFF), and 435-455 (AISCTGITSLLCTLPVALIHF).

It belongs to the major facilitator superfamily. Nitrate/nitrite porter (TC 2.A.1.8) family. As to expression, expressed in the base of the lateral root primordia, root-shoot junction zone, leaves, ends of the husk and vascular tissue of the anthers.

The protein localises to the cell membrane. In terms of biological role, involved in nitrate transport. This Oryza sativa subsp. japonica (Rice) protein is Probable high-affinity nitrate transporter 2.4 (NRT2.4).